Here is a 313-residue protein sequence, read N- to C-terminus: 3'-5' exoribonuclease YhaM (313 aa).

Residues 163–279 enclose the HD domain; that stretch reads HVVSMLRLAK…LHQIDLMDAS (117 aa).

It belongs to the YhaM family.

Its function is as follows. Shows a 3'-5' exoribonuclease activity. The sequence is that of 3'-5' exoribonuclease YhaM from Listeria welshimeri serovar 6b (strain ATCC 35897 / DSM 20650 / CCUG 15529 / CIP 8149 / NCTC 11857 / SLCC 5334 / V8).